A 421-amino-acid chain; its full sequence is Zinc metalloproteinase-disintegrin-like lachestatin-1 (421 aa).

Positions 10 to 206 (KYVKLVLVAD…DMPQCILEKP (197 aa)) constitute a Peptidase M12B domain. Intrachain disulfides connect cysteine 121/cysteine 201, cysteine 161/cysteine 185, and cysteine 163/cysteine 168. Histidine 146 is a binding site for Zn(2+). Residue glutamate 147 is part of the active site. Residues histidine 150 and histidine 156 each coordinate Zn(2+). One can recognise a Disintegrin domain in the interval 214-299 (PPVCGNYFVE…AECTDRFQRN (86 aa)). Ca(2+) is bound by residues valine 216, asparagine 219, phenylalanine 221, glutamate 223, glutamate 226, and aspartate 229. 14 disulfide bridges follow: cysteine 217–cysteine 246, cysteine 228–cysteine 241, cysteine 230–cysteine 236, cysteine 240–cysteine 263, cysteine 254–cysteine 260, cysteine 259–cysteine 285, cysteine 272–cysteine 292, cysteine 279–cysteine 310, cysteine 303–cysteine 315, cysteine 322–cysteine 372, cysteine 337–cysteine 383, cysteine 350–cysteine 360, cysteine 367–cysteine 409, and cysteine 403–cysteine 414. A D/ECD-tripeptide motif is present at residues 278 to 280 (ECD). Residues aspartate 280, methionine 281, aspartate 283, aspartate 294, and arginine 295 each contribute to the Ca(2+) site. An N-linked (GlcNAc...) asparagine glycan is attached at asparagine 312.

The protein belongs to the venom metalloproteinase (M12B) family. P-III subfamily. P-IIIc sub-subfamily. As to quaternary structure, homodimer; disulfide-linked. It depends on Zn(2+) as a cofactor. In terms of tissue distribution, expressed by the venom gland.

The protein localises to the secreted. Snake venom zinc metalloprotease that induces apoptosis in vascular endothelial cells (VEC), without degrading the extracellular matrix (it cannot cleave collagen) or inhibiting adhesion of VEC. Has also fibrinogenolytic and hemorrhagic activities. The protein is Zinc metalloproteinase-disintegrin-like lachestatin-1 of Lachesis muta rhombeata (Bushmaster).